The primary structure comprises 802 residues: Fibroblast growth factor receptor 4 (802 aa).

The N-terminal stretch at 1 to 21 is a signal peptide; it reads MRLLLALLGVLLSVPGPPVLS. The 97-residue stretch at 22 to 118 folds into the Ig-like C2-type 1 domain; it reads LEASEEVELE…VLQNLTLITG (97 aa). The Extracellular portion of the chain corresponds to 22-369; sequence LEASEEVELE…AAAPEARYTD (348 aa). C57 and C101 are oxidised to a cystine. A glycan (N-linked (GlcNAc...) asparagine) is linked at N112. The disordered stretch occupies residues 119-148; that stretch reads DSLTSSNDDEDPKSHRDPSNRHSYPQQAPY. 2 Ig-like C2-type domains span residues 152 to 240 and 249 to 349; these read PQRM…YLLD and PILQ…AWLT. An intrachain disulfide couples C172 to C224. N258, N290, N311, and N322 each carry an N-linked (GlcNAc...) asparagine glycan. Residues C271 and C333 are joined by a disulfide bond. The chain crosses the membrane as a helical span at residues 370-390; it reads IILYASGSLALAVLLLLAGLY. Y390 is modified (phosphotyrosine; in variant R-388). At 391–802 the chain is on the cytoplasmic side; that stretch reads RGQALHGRHP…SFPFGSGVQT (412 aa). The 289-residue stretch at 467-755 folds into the Protein kinase domain; the sequence is LVLGKPLGEG…VLLAVSEEYL (289 aa). ATP-binding positions include 473–481 and K503; that span reads LGEGCFGQV. At S573 the chain carries Phosphoserine. D612 (proton acceptor) is an active-site residue. A phosphotyrosine; by autocatalysis mark is found at Y642, Y643, and Y754.

This sequence belongs to the protein kinase superfamily. Tyr protein kinase family. Fibroblast growth factor receptor subfamily. In terms of assembly, monomer. Homodimer after ligand binding. Interacts with FGF1, FGF2, FGF4, FGF6, FGF8, FGF9, FGF16, FGF17, FGF18, FGF19, FGF21 and FGF23 (in vitro). Binding affinity for FGF family members is enhanced by interactions between FGFs and heparan sulfate proteoglycans. Interacts with KLB; this strongly increases the affinity for FGF19 and FGF23. Affinity for FGF19 is strongly increased by KLB and sulfated glycosaminoglycans. KLB and KL both interact with the core-glycosylated FGFR4 in the endoplasmic reticulum and promote its degradation, so that only FGFR4 with fully mature N-glycans is expressed at the cell surface. Identified in a complex with NCAM1, CDH2, PLCG1, FRS2, SRC, SHC1, GAP43 and CTTN. Interacts with MMP14 and HIP1. Interacts with STAT3. Post-translationally, N-glycosylated. Full maturation of the glycan chains in the Golgi is essential for high affinity interaction with FGF19. In terms of processing, ubiquitinated. Subject to proteasomal degradation when not fully glycosylated. Autophosphorylated. Binding of FGF family members together with heparan sulfate proteoglycan or heparin promotes receptor dimerization and autophosphorylation on tyrosine residues. Autophosphorylation occurs in trans between the two FGFR molecules present in the dimer. As to expression, expressed in gastrointestinal epithelial cells, pancreas, and gastric and pancreatic cancer cell lines.

It is found in the cell membrane. The protein resides in the endosome. It localises to the endoplasmic reticulum. The protein localises to the secreted. It catalyses the reaction L-tyrosyl-[protein] + ATP = O-phospho-L-tyrosyl-[protein] + ADP + H(+). Present in an inactive conformation in the absence of bound ligand. Ligand binding leads to dimerization and activation by autophosphorylation on tyrosine residues. In terms of biological role, tyrosine-protein kinase that acts as a cell-surface receptor for fibroblast growth factors and plays a role in the regulation of cell proliferation, differentiation and migration, and in regulation of lipid metabolism, bile acid biosynthesis, glucose uptake, vitamin D metabolism and phosphate homeostasis. Required for normal down-regulation of the expression of CYP7A1, the rate-limiting enzyme in bile acid synthesis, in response to FGF19. Phosphorylates PLCG1 and FRS2. Ligand binding leads to the activation of several signaling cascades. Activation of PLCG1 leads to the production of the cellular signaling molecules diacylglycerol and inositol 1,4,5-trisphosphate. Phosphorylation of FRS2 triggers recruitment of GRB2, GAB1, PIK3R1 and SOS1, and mediates activation of RAS, MAPK1/ERK2, MAPK3/ERK1 and the MAP kinase signaling pathway, as well as of the AKT1 signaling pathway. Promotes SRC-dependent phosphorylation of the matrix protease MMP14 and its lysosomal degradation. FGFR4 signaling is down-regulated by receptor internalization and degradation; MMP14 promotes internalization and degradation of FGFR4. Mutations that lead to constitutive kinase activation or impair normal FGFR4 inactivation lead to aberrant signaling. This is Fibroblast growth factor receptor 4 (FGFR4) from Homo sapiens (Human).